The following is a 1243-amino-acid chain: Probable phospholipid-transporting ATPase 7 (1243 aa).

The Cytoplasmic portion of the chain corresponds to 1 to 74 (MGRRRIRSRI…TTRYNLITFL (74 aa)). The helical transmembrane segment at 75–96 (PKCLYEQFHRVANFYFLVAAIL) threads the bilayer. At 97–100 (SVFP) the chain is on the extracellular side. The helical transmembrane segment at 101–123 (LSPFNKWSMIAPLIFVVGLSMGK) threads the bilayer. The Cytoplasmic portion of the chain corresponds to 124 to 305 (EALEDWRRFM…SRIEKRMDYI (182 aa)). A helical transmembrane segment spans residues 306 to 327 (IYTLFALLVLVSFISSLGFAVM). Over 328-359 (TKMHMGDWWYLRPDKPERLTNPRNPFHAWVVH) the chain is Extracellular. A helical membrane pass occupies residues 360 to 377 (LITAVLLYGYLIPISLYV). At 378-941 (SIELVKVLQA…HGHWCYKRIA (564 aa)) the chain is on the cytoplasmic side. The active-site 4-aspartylphosphate intermediate is the Asp425. Lys623 is covalently cross-linked (Glycyl lysine isopeptide (Lys-Gly) (interchain with G-Cter in ubiquitin)). Mg(2+)-binding residues include Asp886 and Asp890. Residues 942-961 (QMICYFFYKNITFGLTLFYF) traverse the membrane as a helical segment. Topologically, residues 962–975 (EAFTGFSGQAIYND) are extracellular. Residues 976–995 (SYLLLFNVILTSLPVIALGV) form a helical membrane-spanning segment. The Cytoplasmic segment spans residues 996–1025 (FEQDVSSEVCLQFPALYQQGPKNLFFDWYR). Residues 1026–1048 (IIGWMANGVYASVVIFSLNIGIF) traverse the membrane as a helical segment. At 1049–1061 (HVQSFCSGGQTAD) the chain is on the extracellular side. A helical transmembrane segment spans residues 1062-1084 (MDAMGTAMFTCIIWAVNVQIALT). Topologically, residues 1085–1090 (MSHFTW) are cytoplasmic. A helical transmembrane segment spans residues 1091-1111 (IQHVLIWGSIVTWYIFLALFG). Over 1112 to 1128 (MLPPKVSGNIFHMLSET) the chain is Extracellular. A helical membrane pass occupies residues 1129–1153 (LAPAPIFWLTSLLVIAATTLPYLAY). Residues 1154 to 1243 (ISFQRSLNPL…TDTTSTTQHS (90 aa)) are Cytoplasmic-facing.

It belongs to the cation transport ATPase (P-type) (TC 3.A.3) family. Type IV subfamily.

Its subcellular location is the cell membrane. The protein localises to the endomembrane system. The enzyme catalyses ATP + H2O + phospholipidSide 1 = ADP + phosphate + phospholipidSide 2.. In terms of biological role, involved in transport of phospholipids and in regulation of pollen plasma membrane lipid asymmetry. This Arabidopsis thaliana (Mouse-ear cress) protein is Probable phospholipid-transporting ATPase 7.